A 445-amino-acid chain; its full sequence is UDP-N-acetylmuramoylalanine--D-glutamate ligase (445 aa).

117–123 (GSNGKTT) contributes to the ATP binding site.

Belongs to the MurCDEF family.

It localises to the cytoplasm. It carries out the reaction UDP-N-acetyl-alpha-D-muramoyl-L-alanine + D-glutamate + ATP = UDP-N-acetyl-alpha-D-muramoyl-L-alanyl-D-glutamate + ADP + phosphate + H(+). The protein operates within cell wall biogenesis; peptidoglycan biosynthesis. Functionally, cell wall formation. Catalyzes the addition of glutamate to the nucleotide precursor UDP-N-acetylmuramoyl-L-alanine (UMA). This chain is UDP-N-acetylmuramoylalanine--D-glutamate ligase, found in Neisseria meningitidis serogroup C (strain 053442).